Consider the following 65-residue polypeptide: Photosystem II reaction center protein J (65 aa).

The segment covering 1-18 (MSSKLKGPDGRLPDRLPD) has biased composition (basic and acidic residues). The tract at residues 1-21 (MSSKLKGPDGRLPDRLPDGRP) is disordered. Residues 36–56 (LWLVATAGGIAVIFVLGIFFY) traverse the membrane as a helical segment.

This sequence belongs to the PsbJ family. As to quaternary structure, PSII is composed of 1 copy each of membrane proteins PsbA, PsbB, PsbC, PsbD, PsbE, PsbF, PsbH, PsbI, PsbJ, PsbK, PsbL, PsbM, PsbT, PsbX, PsbY, Psb30/Ycf12, peripheral proteins PsbO, CyanoQ (PsbQ), PsbU, PsbV and a large number of cofactors. It forms dimeric complexes.

It localises to the cellular thylakoid membrane. One of the components of the core complex of photosystem II (PSII). PSII is a light-driven water:plastoquinone oxidoreductase that uses light energy to abstract electrons from H(2)O, generating O(2) and a proton gradient subsequently used for ATP formation. It consists of a core antenna complex that captures photons, and an electron transfer chain that converts photonic excitation into a charge separation. The polypeptide is Photosystem II reaction center protein J (Prochlorococcus marinus (strain SARG / CCMP1375 / SS120)).